The chain runs to 77 residues: Large ribosomal subunit protein bL28 (77 aa).

The protein belongs to the bacterial ribosomal protein bL28 family.

This chain is Large ribosomal subunit protein bL28, found in Methylibium petroleiphilum (strain ATCC BAA-1232 / LMG 22953 / PM1).